Reading from the N-terminus, the 427-residue chain is Alpha/beta hydrolase gkaG (427 aa).

Aspartate 368 is an active-site residue.

The protein belongs to the AB hydrolase superfamily. As to quaternary structure, homodimer.

It participates in mycotoxin biosynthesis. Alpha/beta hydrolase; part of the gene cluster that mediates the biosynthesis of GKK1032, fungal natural products containing a macrocyclic para-cyclophane connected to a decahydrofluorene ring system that show potent antitumor activities. Within the pathway, gkaG catalyzes the Knoevenagel condensation that affords the 3-pyrrolin-2-one ring, using as substrate the polyketide-tyrosyl acyl thioester product of gkaA. The pathway begins with the PKS-NRPS gkaA which, with the help of the trans-enoyl reductase gkaC, synthesizes the polyketide-tyrosyl acyl thioester product which can be reductively off-loaded by the terminal reductase (R) domain in gkaA. The alpha/beta hydrolase gkaG is then required to catalyze the subsequent Knoevenagel condensation that affords the 3-pyrrolin-2-one ring, whereas the three proteins gkaB, gkaX and gkaZ then function synergistically to form the cyclophane. The protein is Alpha/beta hydrolase gkaG of Penicillium citrinum.